Here is a 554-residue protein sequence, read N- to C-terminus: Dihydroxy-acid dehydratase (554 aa).

Position 78 (D78) interacts with Mg(2+). C119 is a binding site for [2Fe-2S] cluster. Residues D120 and K121 each coordinate Mg(2+). K121 is subject to N6-carboxylysine. C192 is a binding site for [2Fe-2S] cluster. Residue E443 coordinates Mg(2+). S469 (proton acceptor) is an active-site residue.

Belongs to the IlvD/Edd family. As to quaternary structure, homodimer. [2Fe-2S] cluster is required as a cofactor. It depends on Mg(2+) as a cofactor.

The enzyme catalyses (2R)-2,3-dihydroxy-3-methylbutanoate = 3-methyl-2-oxobutanoate + H2O. It carries out the reaction (2R,3R)-2,3-dihydroxy-3-methylpentanoate = (S)-3-methyl-2-oxopentanoate + H2O. It participates in amino-acid biosynthesis; L-isoleucine biosynthesis; L-isoleucine from 2-oxobutanoate: step 3/4. Its pathway is amino-acid biosynthesis; L-valine biosynthesis; L-valine from pyruvate: step 3/4. In terms of biological role, functions in the biosynthesis of branched-chain amino acids. Catalyzes the dehydration of (2R,3R)-2,3-dihydroxy-3-methylpentanoate (2,3-dihydroxy-3-methylvalerate) into 2-oxo-3-methylpentanoate (2-oxo-3-methylvalerate) and of (2R)-2,3-dihydroxy-3-methylbutanoate (2,3-dihydroxyisovalerate) into 2-oxo-3-methylbutanoate (2-oxoisovalerate), the penultimate precursor to L-isoleucine and L-valine, respectively. This is Dihydroxy-acid dehydratase from Shouchella clausii (strain KSM-K16) (Alkalihalobacillus clausii).